We begin with the raw amino-acid sequence, 422 residues long: UDP-N-acetylmuramoylalanine--D-glutamate ligase (422 aa).

102-108 serves as a coordination point for ATP; that stretch reads GTNGKTT.

It belongs to the MurCDEF family.

Its subcellular location is the cytoplasm. It catalyses the reaction UDP-N-acetyl-alpha-D-muramoyl-L-alanine + D-glutamate + ATP = UDP-N-acetyl-alpha-D-muramoyl-L-alanyl-D-glutamate + ADP + phosphate + H(+). The protein operates within cell wall biogenesis; peptidoglycan biosynthesis. Functionally, cell wall formation. Catalyzes the addition of glutamate to the nucleotide precursor UDP-N-acetylmuramoyl-L-alanine (UMA). The sequence is that of UDP-N-acetylmuramoylalanine--D-glutamate ligase from Helicobacter pylori (strain HPAG1).